The sequence spans 292 residues: uncharacterized protein (292 aa).

This sequence belongs to the glycosyltransferase 2 family. WaaE/KdtX subfamily.

This is an uncharacterized protein from Rickettsia prowazekii (strain Madrid E).